The primary structure comprises 250 residues: Cysteine proteinase inhibitor 12 (250 aa).

The N-terminal stretch at 1 to 32 (MRVAATTRPASSSAAAPLPLFLLLAVAAAAAA) is a signal peptide. Cystatin domains are found at residues 49 to 137 (GGAH…RNTG) and 156 to 202 (PGWR…AEVV). Residues 93-97 (QVVAG) carry the Secondary area of contact motif.

The protein belongs to the cystatin family. Phytocystatin subfamily.

Its subcellular location is the secreted. Functionally, specific inhibitor of cysteine proteinases. Probably involved in the regulation of endogenous processes and in defense against pests and pathogens. This chain is Cysteine proteinase inhibitor 12, found in Oryza sativa subsp. japonica (Rice).